A 118-amino-acid chain; its full sequence is RNA guanine-N7 methyltransferase activating subunit (118 aa).

Threonine 2 carries the N-acetylthreonine modification. The segment at 2 to 55 is interaction with RNMT; the sequence is TDTAEAVPNFEEMFASRFTENDKEYQEYLKRPPESPPIVEEWNSRAGGNQRNRG. The segment at 30–118 is disordered; that stretch reads LKRPPESPPI…YNQRPPYGYY (89 aa). Serine 36 carries the post-translational modification Phosphoserine. Residues 36–42 carry the RNMT-activating domain motif; sequence SPPIVEE. The segment covering 45–56 has biased composition (low complexity); that stretch reads SRAGGNQRNRGN. Residues 56–118 form an RNA-binding region; the sequence is NRLQDNRQFR…YNQRPPYGYY (63 aa). The segment covering 57-70 has biased composition (basic and acidic residues); sequence RLQDNRQFRGRDNR. Polar residues predominate over residues 76 to 93; it reads DNRSNQWHGRSWGNNYPQ. Arginine 85 bears the Omega-N-methylarginine mark. At serine 86 the chain carries Phosphoserine. Over residues 98-109 the composition is skewed to low complexity; that stretch reads PYYPQQYGHYGY.

It belongs to the RAM family. As to quaternary structure, interacts with RNMT; this interaction enhances mRNA binding and cap methyltransferase activity.

It is found in the nucleus. Regulatory subunit of the mRNA-capping methyltransferase RNMT:RAMAC complex that methylates the N7 position of the added guanosine to the 5'-cap structure of mRNAs. Promotes the recruitment of the methyl donor, S-adenosyl-L-methionine, to RNMT. Regulates RNMT expression by a post-transcriptional stabilizing mechanism. Binds RNA. This Pongo abelii (Sumatran orangutan) protein is RNA guanine-N7 methyltransferase activating subunit (RAMAC).